A 520-amino-acid chain; its full sequence is Bifunctional purine biosynthesis protein PurH (520 aa).

The MGS-like domain maps to 1–146; it reads MAPVALLSVS…KNHADVAVLT (146 aa).

The protein belongs to the PurH family.

The catalysed reaction is (6R)-10-formyltetrahydrofolate + 5-amino-1-(5-phospho-beta-D-ribosyl)imidazole-4-carboxamide = 5-formamido-1-(5-phospho-D-ribosyl)imidazole-4-carboxamide + (6S)-5,6,7,8-tetrahydrofolate. It catalyses the reaction IMP + H2O = 5-formamido-1-(5-phospho-D-ribosyl)imidazole-4-carboxamide. The protein operates within purine metabolism; IMP biosynthesis via de novo pathway; 5-formamido-1-(5-phospho-D-ribosyl)imidazole-4-carboxamide from 5-amino-1-(5-phospho-D-ribosyl)imidazole-4-carboxamide (10-formyl THF route): step 1/1. It functions in the pathway purine metabolism; IMP biosynthesis via de novo pathway; IMP from 5-formamido-1-(5-phospho-D-ribosyl)imidazole-4-carboxamide: step 1/1. In Synechococcus sp. (strain CC9605), this protein is Bifunctional purine biosynthesis protein PurH.